Reading from the N-terminus, the 95-residue chain is Glutamyl-tRNA(Gln) amidotransferase subunit C (95 aa).

It belongs to the GatC family. As to quaternary structure, heterotrimer of A, B and C subunits.

The enzyme catalyses L-glutamyl-tRNA(Gln) + L-glutamine + ATP + H2O = L-glutaminyl-tRNA(Gln) + L-glutamate + ADP + phosphate + H(+). It carries out the reaction L-aspartyl-tRNA(Asn) + L-glutamine + ATP + H2O = L-asparaginyl-tRNA(Asn) + L-glutamate + ADP + phosphate + 2 H(+). Its function is as follows. Allows the formation of correctly charged Asn-tRNA(Asn) or Gln-tRNA(Gln) through the transamidation of misacylated Asp-tRNA(Asn) or Glu-tRNA(Gln) in organisms which lack either or both of asparaginyl-tRNA or glutaminyl-tRNA synthetases. The reaction takes place in the presence of glutamine and ATP through an activated phospho-Asp-tRNA(Asn) or phospho-Glu-tRNA(Gln). The sequence is that of Glutamyl-tRNA(Gln) amidotransferase subunit C from Mesorhizobium japonicum (strain LMG 29417 / CECT 9101 / MAFF 303099) (Mesorhizobium loti (strain MAFF 303099)).